A 242-amino-acid polypeptide reads, in one-letter code: N-alpha-acetyltransferase 60 (242 aa).

Topologically, residues 1–192 are cytoplasmic; the sequence is MTEVVPSSAL…GGHPPWTILD (192 aa). One can recognise an N-acetyltransferase domain in the interval 13 to 182; it reads VSLRLLCHDD…DGFTYVLYIN (170 aa). Y38 serves as a coordination point for substrate. Residue K79 is modified to N6-acetyllysine; by autocatalysis. Residue Y97 is part of the active site. L99 provides a ligand contact to substrate. 101-103 contributes to the acetyl-CoA binding site; the sequence is LGV. 3 positions are modified to N6-acetyllysine; by autocatalysis: K105, K109, and K121. Position 109–114 (109–114) interacts with acetyl-CoA; that stretch reads KHGIGS. H138 is an active-site residue. Acetyl-CoA is bound by residues N143 and 150–153; that span reads YENR. At K156 the chain carries N6-acetyllysine; by autocatalysis. The tract at residues 162 to 173 is required for homodimerization; the sequence is PYYYSIRGVLKD. Y165 contacts substrate. Positions 193-236 form an intramembrane region, helical; the sequence is YIQHLGSALASLSPCSIPHRVYRQAHSLLCSFLPWSGISSKSGI. At 237 to 242 the chain is on the cytoplasmic side; the sequence is EYSRTM.

Belongs to the acetyltransferase family. NAA60 subfamily. In terms of assembly, monomer and homodimer; monomer in presence of substrate and homodimer in its absence. Post-translationally, acetylated: autoacetylation is required for optimal acetyltransferase activity.

The protein localises to the golgi apparatus membrane. The enzyme catalyses N-terminal L-methionyl-[transmembrane protein] + acetyl-CoA = N-terminal N(alpha)-acetyl-L-methionyl-[transmembrane protein] + CoA + H(+). The catalysed reaction is L-lysyl-[protein] + acetyl-CoA = N(6)-acetyl-L-lysyl-[protein] + CoA + H(+). Its function is as follows. N-alpha-acetyltransferase that specifically mediates the acetylation of N-terminal residues of the transmembrane proteins, with a strong preference for N-termini facing the cytosol. Displays N-terminal acetyltransferase activity towards a range of N-terminal sequences including those starting with Met-Lys, Met-Val, Met-Ala and Met-Met. Required for normal chromosomal segregation during anaphase. May also show histone acetyltransferase activity; such results are however unclear in vivo and would require additional experimental evidences. This chain is N-alpha-acetyltransferase 60, found in Homo sapiens (Human).